Consider the following 403-residue polypeptide: 3-(3-hydroxy-phenyl)propionate transporter (403 aa).

Residues 1–16 (MSTRTPSSSSSRLMLT) lie on the Cytoplasmic side of the membrane. The chain crosses the membrane as a helical span at residues 17-37 (IGLCFLVALMEGLDLQAAGIA). The Periplasmic segment spans residues 38 to 53 (AGGIAQAFALDKMQMG). Residues 54–74 (WIFSAGILGLLPGALVGGMLA) form a helical membrane-spanning segment. Residues 75–81 (DRYGRKR) are Cytoplasmic-facing. The chain crosses the membrane as a helical span at residues 82-102 (ILIGSVALFGLFSLATAIAWD). The Periplasmic segment spans residues 103-105 (FPS). Residues 106–126 (LVFARLMTGVGLGAALPNLIA) traverse the membrane as a helical segment. Over 127–142 (LTSEAAGPRFRGTAVS) the chain is Cytoplasmic. The helical transmembrane segment at 143–163 (LMYCGVPIGAALAATLGFAGA) threads the bilayer. Asparagine 164 is a topological domain (periplasmic). A helical membrane pass occupies residues 165–185 (LAWQTVFWVGGVVPLILVPLL). Residues 186 to 217 (MRWLPESAVFAGEKQSAPPLRALFAPETATAT) lie on the Cytoplasmic side of the membrane. A helical membrane pass occupies residues 218–238 (LLLWLCYFFTLLVVYMLINWL). Residues 239–253 (PLLLVEQGFQPSQAA) are Periplasmic-facing. A helical transmembrane segment spans residues 254 to 274 (GVMFALQMGAASGTLMLGALM). Residues 275 to 279 (DKLRP) lie on the Cytoplasmic side of the membrane. A helical transmembrane segment spans residues 280–300 (VTMSLLIYSGMLASLLALGTV). Topologically, residues 301–306 (SSFNGM) are periplasmic. Residues 307 to 327 (LLAGFVAGLFATGGQSVLYAL) form a helical membrane-spanning segment. Over 328 to 339 (APLFYSSQIRAT) the chain is Cytoplasmic. Residues 340–360 (GVGTAVAVGRLGAMSGPLLAG) form a helical membrane-spanning segment. Residues 361-369 (KMLALGTGT) lie on the Periplasmic side of the membrane. The chain crosses the membrane as a helical span at residues 370 to 390 (VGVMAASAPGILVAGLAVFIL). At 391–403 (MSRRSRIQPCADA) the chain is on the cytoplasmic side.

This sequence belongs to the major facilitator superfamily. Aromatic acid:H(+) symporter (AAHS) (TC 2.A.1.15) family.

The protein resides in the cell inner membrane. It carries out the reaction 3-(3-hydroxyphenyl)propanoate(in) + H(+)(in) = 3-(3-hydroxyphenyl)propanoate(out) + H(+)(out). Its activity is regulated as follows. Inhibited by carbonyl cyanide m-chlorophenylhydrazone (CCCP), which dissipates the proton motive force. In terms of biological role, uptake of 3-(3-hydroxyphenyl)propionate (3HPP) across the cytoplasmic membrane. Transport is driven by the proton motive force. Does not transport benzoate, 3-hydroxybenzoate or gentisate. This Escherichia coli (strain K12) protein is 3-(3-hydroxy-phenyl)propionate transporter.